The following is an 88-amino-acid chain: Phosphocarrier protein HPr (88 aa).

The 88-residue stretch at 1–88 folds into the HPr domain; sequence MEKKEFHIVA…ETLQKEGLAE (88 aa). Residue His15 is the Pros-phosphohistidine intermediate of the active site. At Ser46 the chain carries Phosphoserine; by HPrK/P.

Belongs to the HPr family. In terms of assembly, monomer.

It is found in the cytoplasm. Its activity is regulated as follows. Phosphorylation on Ser-46 inhibits the phosphoryl transfer from enzyme I to HPr. Functionally, general (non sugar-specific) component of the phosphoenolpyruvate-dependent sugar phosphotransferase system (sugar PTS). This major carbohydrate active-transport system catalyzes the phosphorylation of incoming sugar substrates concomitantly with their translocation across the cell membrane. The phosphoryl group from phosphoenolpyruvate (PEP) is transferred to the phosphoryl carrier protein HPr by enzyme I. Phospho-HPr then transfers it to the PTS EIIA domain. P-Ser-HPr interacts with the catabolite control protein A (CcpA), forming a complex that binds to DNA at the catabolite response elements cre, operator sites preceding a large number of catabolite-regulated genes. Thus, P-Ser-HPr is a corepressor in carbon catabolite repression (CCR), a mechanism that allows bacteria to coordinate and optimize the utilization of available carbon sources. P-Ser-HPr also plays a role in inducer exclusion, in which it probably interacts with several non-PTS permeases and inhibits their transport activity. This Enterococcus faecalis (strain ATCC 700802 / V583) protein is Phosphocarrier protein HPr (ptsH).